We begin with the raw amino-acid sequence, 385 residues long: L-arabinitol 4-dehydrogenase (385 aa).

Zn(2+) is bound by residues Cys54, His79, Glu80, Cys109, Cys112, Cys115, Cys123, and Glu164. NAD(+)-binding positions include 191–192 (PI), Asp212, Arg217, Ile292, and 316–318 (QYR).

The protein belongs to the zinc-containing alcohol dehydrogenase family. As to quaternary structure, homotetramer. The cofactor is Zn(2+).

It catalyses the reaction L-arabinitol + NAD(+) = L-xylulose + NADH + H(+). Its pathway is carbohydrate degradation; L-arabinose degradation via L-arabinitol; D-xylulose 5-phosphate from L-arabinose (fungal route): step 2/5. In terms of biological role, catalyzes the NAD-dependent oxidation of L-arabinitol to L-xylulose in the fungal L-arabinose catabolic pathway. L-arabinose catabolism is important for using plant material as a carbon source. NADP cannot act as a cosubstrate. The protein is L-arabinitol 4-dehydrogenase (lad1) of Penicillium rubens (strain ATCC 28089 / DSM 1075 / NRRL 1951 / Wisconsin 54-1255) (Penicillium chrysogenum).